The primary structure comprises 398 residues: Argininosuccinate synthase (398 aa).

Position 8-16 (8-16 (AYSGGLDTS)) interacts with ATP. Tyr87 contributes to the L-citrulline binding site. Gly117 is a binding site for ATP. Residues Thr119, Asn123, and Asp124 each coordinate L-aspartate. L-citrulline is bound at residue Asn123. L-citrulline-binding residues include Arg127, Ser175, Glu260, and Tyr272.

It belongs to the argininosuccinate synthase family. Type 1 subfamily. Homotetramer.

The protein localises to the cytoplasm. The enzyme catalyses L-citrulline + L-aspartate + ATP = 2-(N(omega)-L-arginino)succinate + AMP + diphosphate + H(+). Its pathway is amino-acid biosynthesis; L-arginine biosynthesis; L-arginine from L-ornithine and carbamoyl phosphate: step 2/3. This is Argininosuccinate synthase from Mycobacterium avium (strain 104).